A 219-amino-acid chain; its full sequence is ATP synthase delta chain, chloroplastic (219 aa).

The N-terminal 33 residues, 1–33 (MLAAKSIAGPRAFKASAVRAAPKAGRRTVVVMA), are a transit peptide targeting the chloroplast.

This sequence belongs to the ATPase delta chain family. F-type ATPases have 2 components, F(1) - the catalytic core - and F(0) - the membrane proton channel. F(1) has five subunits: alpha(3), beta(3), gamma(1), delta(1), epsilon(1). F(0) has four main subunits: a(1), b(1), b'(1) and c(10-14). The alpha and beta chains form an alternating ring which encloses part of the gamma chain. F(1) is attached to F(0) by a central stalk formed by the gamma and epsilon chains, while a peripheral stalk is formed by the delta, b and b' chains.

It is found in the plastid. Its subcellular location is the chloroplast thylakoid membrane. Its function is as follows. F(1)F(0) ATP synthase produces ATP from ADP in the presence of a proton or sodium gradient. F-type ATPases consist of two structural domains, F(1) containing the extramembraneous catalytic core and F(0) containing the membrane proton channel, linked together by a central stalk and a peripheral stalk. During catalysis, ATP synthesis in the catalytic domain of F(1) is coupled via a rotary mechanism of the central stalk subunits to proton translocation. This protein seems to be part of the stalk that links CF(0) to CF(1). It either transmits conformational changes from CF(0) into CF(1) or is implicated in proton conduction. In Chlamydomonas reinhardtii (Chlamydomonas smithii), this protein is ATP synthase delta chain, chloroplastic.